The sequence spans 70 residues: Large ribosomal subunit protein uL30 (70 aa).

This sequence belongs to the universal ribosomal protein uL30 family. Part of the 50S ribosomal subunit.

The polypeptide is Large ribosomal subunit protein uL30 (Renibacterium salmoninarum (strain ATCC 33209 / DSM 20767 / JCM 11484 / NBRC 15589 / NCIMB 2235)).